Here is a 100-residue protein sequence, read N- to C-terminus: Urease subunit gamma (100 aa).

It belongs to the urease gamma subunit family. Heterotrimer of UreA (gamma), UreB (beta) and UreC (alpha) subunits. Three heterotrimers associate to form the active enzyme.

It is found in the cytoplasm. It catalyses the reaction urea + 2 H2O + H(+) = hydrogencarbonate + 2 NH4(+). The protein operates within nitrogen metabolism; urea degradation; CO(2) and NH(3) from urea (urease route): step 1/1. The chain is Urease subunit gamma from Alcanivorax borkumensis (strain ATCC 700651 / DSM 11573 / NCIMB 13689 / SK2).